The primary structure comprises 480 residues: 2-phosphoxylose phosphatase 1 (480 aa).

Residues 1–6 (MLFRNR) are Cytoplasmic-facing. Residues 7 to 27 (FLLLLALAALLAFVSLSLQFF) form a helical; Signal-anchor for type II membrane protein membrane-spanning segment. Topologically, residues 28 to 480 (HLIPVSTPKN…YYDACHREGF (453 aa)) are lumenal. His97 acts as the Nucleophile in catalysis. N-linked (GlcNAc...) asparagine glycosylation is found at Asn305 and Asn354. Residue Asp379 is the Proton donor of the active site.

This sequence belongs to the histidine acid phosphatase family. Interacts with B3GAT3; the interaction increases the 2-phosphoxylose phosphatase activity of PXYLP1 during completion of linkage region formation in a B3GAT3-mediated manner. Widely expressed. Strongly expressed in spleen, fetal liver, moderately in placenta, pancreas, kidney, thymus and colon.

It localises to the golgi apparatus membrane. The catalysed reaction is 3-O-[beta-D-GlcA-(1-&gt;3)-beta-D-Gal-(1-&gt;3)-beta-D-Gal-(1-&gt;4)-beta-D-2-O-P-Xyl]-L-seryl-[protein] + H2O = 3-O-(beta-D-GlcA-(1-&gt;3)-beta-D-Gal-(1-&gt;3)-beta-D-Gal-(1-&gt;4)-beta-D-Xyl)-L-seryl-[protein] + phosphate. Its function is as follows. Responsible for the 2-O-dephosphorylation of xylose in the glycosaminoglycan-protein linkage region of proteoglycans thereby regulating the amount of mature glycosaminoglycan (GAG) chains. Sulfated glycosaminoglycans (GAGs), including heparan sulfate and chondroitin sulfate, are synthesized on the so-called common GAG-protein linkage region (GlcUAbeta1-3Galbeta1-3Galbeta1-4Xylbeta1-O-Ser) of core proteins, which is formed by the stepwise addition of monosaccharide residues by the respective specific glycosyltransferases. Xylose 2-O-dephosphorylation during completion of linkage region formation is a prerequisite for the initiation and efficient elongation of the repeating disaccharide region of GAG chains. In Homo sapiens (Human), this protein is 2-phosphoxylose phosphatase 1.